Reading from the N-terminus, the 399-residue chain is Acetate kinase (399 aa).

Residue asparagine 7 coordinates Mg(2+). Lysine 14 lines the ATP pocket. Arginine 90 provides a ligand contact to substrate. The active-site Proton donor/acceptor is aspartate 147. Residues 207 to 211 (HLGNG), 282 to 284 (DFR), and 330 to 334 (GIGEN) contribute to the ATP site. Residue glutamate 385 participates in Mg(2+) binding.

Belongs to the acetokinase family. Homodimer. Mg(2+) serves as cofactor. Requires Mn(2+) as cofactor.

Its subcellular location is the cytoplasm. The catalysed reaction is acetate + ATP = acetyl phosphate + ADP. It participates in metabolic intermediate biosynthesis; acetyl-CoA biosynthesis; acetyl-CoA from acetate: step 1/2. In terms of biological role, catalyzes the formation of acetyl phosphate from acetate and ATP. Can also catalyze the reverse reaction. The protein is Acetate kinase of Caldicellulosiruptor saccharolyticus (strain ATCC 43494 / DSM 8903 / Tp8T 6331).